The sequence spans 122 residues: Large ribosomal subunit protein uL18 (122 aa).

This sequence belongs to the universal ribosomal protein uL18 family. As to quaternary structure, part of the 50S ribosomal subunit; part of the 5S rRNA/L5/L18/L25 subcomplex. Contacts the 5S and 23S rRNAs.

Functionally, this is one of the proteins that bind and probably mediate the attachment of the 5S RNA into the large ribosomal subunit, where it forms part of the central protuberance. The sequence is that of Large ribosomal subunit protein uL18 from Prochlorococcus marinus (strain MIT 9215).